We begin with the raw amino-acid sequence, 227 residues long: MALPTKSSILDLSSGTPCTRSPEESHEAWAQCKDAGRQLPEYKAVVVGASGVGKSALTIQMTHQCFVKDHDPTIQDSYWKEVARDNGGYILNVLDTSGQDIHRALRDQCLASGDGVLGVFALDDPSSLDQLQQIWSTWTPHHKQPLVLVGNKCDLVTTAGDAHAAAALLAHKLGAPLVKTSAKTRQGVEEAFALLVHEIQRAQEAVAESSKKTRHQKAVCSCGCSVA.

Residues 1 to 19 show a composition bias toward polar residues; it reads MALPTKSSILDLSSGTPCT. The segment at 1–25 is disordered; that stretch reads MALPTKSSILDLSSGTPCTRSPEES. 48–55 provides a ligand contact to GTP; sequence GASGVGKS. An Effector region motif is present at residues 70–78; sequence HDPTIQDSY. GTP contacts are provided by residues 95 to 99 and 151 to 154; these read DTSGQ and NKCD. 2 S-palmitoyl cysteine lipidation sites follow: C220 and C222. C224 bears the Cysteine methyl ester mark. C224 is lipidated: S-farnesyl cysteine. Positions 225–227 are cleaved as a propeptide — removed in mature form; it reads SVA.

Belongs to the small GTPase superfamily. Ras family. As to quaternary structure, interacts with PIK3CD. As to expression, expressed in several undifferentiated mouse embryonic stem cell lines.

It is found in the cell membrane. The enzyme catalyses GTP + H2O = GDP + phosphate + H(+). With respect to regulation, alternates between an inactive form bound to GDP and an active form bound to GTP. Activated by a guanine nucleotide-exchange factor (GEF) and inactivated by a GTPase-activating protein (GAP). In terms of biological role, ras proteins bind GDP/GTP and possess intrinsic GTPase activity. Plays an important role in the tumor-like growth properties of embryonic stem cells. In Mus musculus (Mouse), this protein is GTPase ERas (Eras).